Here is a 181-residue protein sequence, read N- to C-terminus: Swi1-interacting protein swi3 (181 aa).

The tract at residues 1–47 (MSTAASDSGVEKLVEENKREEVKKNEEEKEFDLGLEENPDSVKKPRK) is disordered. The span at 9–27 (GVEKLVEENKREEVKKNEE) shows a compositional bias: basic and acidic residues. Residues 28 to 39 (EKEFDLGLEENP) show a composition bias toward acidic residues.

It belongs to the CSM3 family. In terms of assembly, fork protection complex (FPC) consisting of swi1 and swi3 interacts with mat1 cis-acting sequences and mat1-proximal polar-terminator of replication (RTS1).

It localises to the nucleus. Functionally, forms a fork protection complex (FPC) with swi1. FPC coordinates leading and lagging strand synthesis and moves with the replication fork. It is required for programmed fork-pausing which is necessary for mating-type switching. FPC stabilizes replication forks in a configuration that is recognized by replication checkpoint sensors. It is involved in termination at the mat1-proximal polar-terminator of replication (RTS1) and also required for activation of the Rad53-like checkpoint kinase cds1. This is Swi1-interacting protein swi3 (swi3) from Schizosaccharomyces pombe (strain 972 / ATCC 24843) (Fission yeast).